The primary structure comprises 156 residues: Small ribosomal subunit protein uS7 (156 aa).

Belongs to the universal ribosomal protein uS7 family. As to quaternary structure, part of the 30S ribosomal subunit. Contacts proteins S9 and S11.

In terms of biological role, one of the primary rRNA binding proteins, it binds directly to 16S rRNA where it nucleates assembly of the head domain of the 30S subunit. Is located at the subunit interface close to the decoding center, probably blocks exit of the E-site tRNA. This is Small ribosomal subunit protein uS7 from Phytoplasma mali (strain AT).